We begin with the raw amino-acid sequence, 182 residues long: MGLLSILRKLKSAPDQEVRILLLGLDNAGKTTLLKQLASEDISHITPTQGFNIKSVQSQGFKLNVWDIGGQRKIRPYWRNYFENTDILIYVIDSADRKRFEETGQELAELLEEEKLSCVPVLIFANKQDLLTAAPASEIAEGLNLHTIRDRVWQIQSCSALTGEGVQDGMNWVCKNVNAKKK.

Residue Gly-2 is the site of N-myristoyl glycine attachment. Residue Ser-5 is modified to Phosphoserine. Residues 24–31 (GLDNAGKT), Thr-48, 67–71 (DIGGQ), Gly-70, 126–129 (NKQD), and 159–161 (SAL) contribute to the GTP site. Mg(2+) contacts are provided by Thr-31 and Thr-48.

Belongs to the small GTPase superfamily. Arf family. Found in a complex with ARL3, RP2 and UNC119 (or UNC119B); RP2 induces hydrolysis of GTP ARL3 in the complex, leading to the release of UNC119 (or UNC119B). Interacts with RP2; interaction is direct and stimulated with the activated GTP-bound form of ARL3. Interacts with SYS1. Interacts with ARL2BP; the GTP-bound form interacts with ARL2BP. Microtubule-associated protein. Does not interact with TBCC. Interacts with RP2. Interacts with PDE6D; the interaction occurs specifically with the GTP-bound form of ARL3. Interacts with GGA1; the interaction recruits PKD1:PKD2 complex to trans-Golgi network and is required for ciliary targeting of PKD1:PKD2 complex. Interacts with DNAAF9.

The protein localises to the golgi apparatus membrane. It localises to the cytoplasm. Its subcellular location is the cytoskeleton. It is found in the spindle. The protein resides in the nucleus. The protein localises to the microtubule organizing center. It localises to the centrosome. Its subcellular location is the cell projection. It is found in the cilium. In terms of biological role, small GTP-binding protein which cycles between an inactive GDP-bound and an active GTP-bound form, and the rate of cycling is regulated by guanine nucleotide exchange factors (GEF) and GTPase-activating proteins (GAP). Required for normal cytokinesis and cilia signaling. Requires assistance from GTPase-activating proteins (GAPs) like RP2 and PDE6D, in order to cycle between inactive GDP-bound and active GTP-bound forms. Required for targeting proteins to the cilium, including myristoylated NPHP3 and prenylated INPP5E. Targets NPHP3 to the ciliary membrane by releasing myristoylated NPHP3 from UNC119B cargo adapter into the cilium. Required for PKD1:PKD2 complex targeting from the trans-Golgi network to the cilium. This chain is ADP-ribosylation factor-like protein 3 (ARL3), found in Sus scrofa (Pig).